The chain runs to 795 residues: MYHSLSETRHPLQPEEQEVGIDPLSSYSNKSGGDSNKNGRRTSSTLDSEGTFNSYRKEWEELFVNNNYLATIRQKGINGQLRSSRFRSICWKLFLCVLPQDKSQWISRIEELRAWYSNIKEIHITNPRKVVGQQDLMINNPLSQDEGSLWNKFFQDKELRSMIEQDVKRTFPEMQFFQQENVRKILTDVLFCYARENEQLLYKQGMHELLAPIVFVLHCDHQAFLHASESAQPSEEMKTVLNPEYLEHDAYAVFSQLMETAEPWFSTFEHDGQKGKETLMTPIPFARPQDLGPTIAIVTKVNQIQDHLLKKHDIELYMHLNRLEIAPQIYGLRWVRLLFGREFPLQDLLVVWDALFADGLSLGLVDYIFVAMLLYIRDALISSNYQTCLGLLMHYPFIGDVHSLILKALFLRDPKRNPRPVTYQFHPNLDYYKARGADLMNKSRTNAKGAPLNINKVSNSLINFGRKLISPAMAPGSAGGPVPGGNSSSSSSVVIPTRTSAEAPSHHLQQQQQQQRLMKSESMPVQLNKGLSSKNISSSPSVESLPGGREFTGSPPSSATKKDSFFSNISRSRSHSKTMGRKESEEELEAQISFLQGQLNDLDAMCKYCAKVMDTHLVNIQDVILQENLEKEDQILVSLAGLKQIKDILKGSLRFNQSQLEAEENEQITIADNHYCSSGQGQGRGQGQSVQMSGAIKQASSETPGCTDRGNSDDFILISKDDDGSSARGSFSGQAQPLRTLRSTSGKSQAPVCSPLVFSDPLMGPASASSSNPSSSPDDDSSKDSGFTIVSPLDI.

Residues methionine 1–glutamine 13 show a composition bias toward basic and acidic residues. The segment at methionine 1–glutamate 49 is disordered. The span at serine 25–glutamate 49 shows a compositional bias: polar residues. At threonine 42 the chain carries Phosphothreonine. Phosphoserine occurs at positions 43 and 44. Positions arginine 56–valine 64 are required for interaction with retromer; involved in interaction with ATG8 family proteins. The LIR 1 signature appears at lysine 57–leucine 62. The Rab-GAP TBC domain maps to leucine 81 to glycine 359. Phosphoserine is present on serine 460. Residues proline 475–serine 564 are disordered. A compositionally biased stretch (low complexity) spans glycine 484–proline 496. Phosphoserine is present on residues serine 522, serine 539, serine 541, serine 544, serine 554, serine 570, serine 584, and serine 730. Residues methionine 523–valine 542 are compositionally biased toward polar residues. Over residues serine 554 to serine 564 the composition is skewed to polar residues. A disordered region spans residues histidine 674–isoleucine 795. Positions alanine 727–serine 748 are enriched in polar residues. Over residues proline 765–serine 776 the composition is skewed to low complexity. Residues serine 785–isoleucine 789 carry the LIR 2 motif. Positions glycine 786–serine 791 are required for interaction with ATG8 family proteins. At serine 791 the chain carries Phosphoserine.

As to quaternary structure, interacts with MAP1LC3A, MAP1LC3B, MAP1LC3C, GABARAP, GABARAPL1, GABARAPL2. Interacts with VPS29 and VPS35; indicative for an association with retromer CSC subcomplex. MAP1LC3A and VPS29 compete for binding to TBC1D5. Interacts with AP2M1; indicative for an association with the AP2 complex. Interacts with ULK1 and ATG13 (phosphorylated); indicative for an association with the activated ULK1-ATG13-FIP200 complex. Interacts with ATG9A; the interactions seems to be restricted to the AP2-clathrin-associated fraction of ATG9A.

The protein localises to the endosome membrane. It localises to the cytoplasmic vesicle. It is found in the autophagosome. In terms of biological role, may act as a GTPase-activating protein (GAP) for Rab family protein(s). May act as a GAP for RAB7A. Can displace RAB7A and retromer CSC subcomplex from the endosomal membrane to the cytosol; at least retromer displacement seems to require its catalytic activity. Required for retrograde transport of cargo proteins from endosomes to the trans-Golgi network (TGN); the function seems to require its catalytic activity. Involved in regulation of autophagy. May act as a molecular switch between endosomal and autophagosomal transport and is involved in reprogramming vesicle trafficking upon autophagy induction. Involved in the trafficking of ATG9A upon activation of autophagy. May regulate the recruitment of ATG9A-AP2-containing vesicles to autophagic membranes. This chain is TBC1 domain family member 5 (TBC1D5), found in Homo sapiens (Human).